We begin with the raw amino-acid sequence, 46 residues long: YVISAIPPTLTSKIHFRPELPSERNQLIQRLPMGAIIKCMMYYKEA.

Belongs to the flavin monoamine oxidase family. In terms of assembly, monomer, homo- or heterodimer (containing two subunits of similar size). Each subunit contains a covalently bound flavin. Enzymatically active as monomer. FAD serves as cofactor.

The protein localises to the mitochondrion outer membrane. It catalyses the reaction a secondary aliphatic amine + O2 + H2O = a primary amine + an aldehyde + H2O2. It carries out the reaction a primary methyl amine + O2 + H2O = an aldehyde + H2O2 + NH4(+). The enzyme catalyses (R)-adrenaline + O2 + H2O = (R)-3,4-dihydroxymandelaldehyde + methylamine + H2O2. The catalysed reaction is dopamine + O2 + H2O = 3,4-dihydroxyphenylacetaldehyde + H2O2 + NH4(+). It catalyses the reaction tyramine + O2 + H2O = (4-hydroxyphenyl)acetaldehyde + H2O2 + NH4(+). It carries out the reaction (R)-noradrenaline + O2 + H2O = (R)-3,4-dihydroxymandelaldehyde + H2O2 + NH4(+). The enzyme catalyses serotonin + O2 + H2O = (5-hydroxyindol-3-yl)acetaldehyde + H2O2 + NH4(+). The catalysed reaction is kynuramine + O2 + H2O = 3-(2-aminophenyl)-3-oxopropanal + H2O2 + NH4(+). It catalyses the reaction tryptamine + O2 + H2O = indole-3-acetaldehyde + H2O2 + NH4(+). It carries out the reaction 2-phenylethylamine + O2 + H2O = 2-phenylacetaldehyde + H2O2 + NH4(+). Catalyzes the oxidative deamination of primary and some secondary amine such as neurotransmitters, with concomitant reduction of oxygen to hydrogen peroxide and has important functions in the metabolism of neuroactive and vasoactive amines in the central nervous system and peripheral tissues. Preferentially oxidizes serotonin. Also catalyzes the oxidative deamination of kynuramine to 3-(2-aminophenyl)-3-oxopropanal that can spontaneously condense to 4-hydroxyquinoline. The protein is Amine oxidase [flavin-containing] A of Ovis aries (Sheep).